A 521-amino-acid polypeptide reads, in one-letter code: GMP synthase [glutamine-hydrolyzing] (521 aa).

The Glutamine amidotransferase type-1 domain occupies 8–203 (KILILDFGAQ…VVDICGCQTL (196 aa)). Cysteine 85 functions as the Nucleophile in the catalytic mechanism. Active-site residues include histidine 177 and glutamate 179. The region spanning 204 to 396 (WTAANIIDDQ…LGLPRTMVYR (193 aa)) is the GMPS ATP-PPase domain. Residue 231–237 (SGGVDSS) participates in ATP binding.

Homodimer.

It carries out the reaction XMP + L-glutamine + ATP + H2O = GMP + L-glutamate + AMP + diphosphate + 2 H(+). The protein operates within purine metabolism; GMP biosynthesis; GMP from XMP (L-Gln route): step 1/1. Catalyzes the synthesis of GMP from XMP. The chain is GMP synthase [glutamine-hydrolyzing] from Xanthomonas oryzae pv. oryzae (strain PXO99A).